Here is a 306-residue protein sequence, read N- to C-terminus: Recombination-associated protein RdgC (306 aa).

This sequence belongs to the RdgC family.

It localises to the cytoplasm. Its subcellular location is the nucleoid. Its function is as follows. May be involved in recombination. The chain is Recombination-associated protein RdgC from Pseudomonas fluorescens (strain Pf0-1).